We begin with the raw amino-acid sequence, 326 residues long: Glyoxylate/hydroxypyruvate reductase B (326 aa).

Residues R237 and E266 contribute to the active site. Residue H285 is the Proton donor of the active site.

Belongs to the D-isomer specific 2-hydroxyacid dehydrogenase family. GhrB subfamily. In terms of assembly, homodimer.

Its subcellular location is the cytoplasm. The enzyme catalyses glycolate + NADP(+) = glyoxylate + NADPH + H(+). It catalyses the reaction (R)-glycerate + NAD(+) = 3-hydroxypyruvate + NADH + H(+). It carries out the reaction (R)-glycerate + NADP(+) = 3-hydroxypyruvate + NADPH + H(+). Functionally, catalyzes the NADPH-dependent reduction of glyoxylate and hydroxypyruvate into glycolate and glycerate, respectively. The protein is Glyoxylate/hydroxypyruvate reductase B of Yersinia pestis bv. Antiqua (strain Nepal516).